The chain runs to 271 residues: GPN-loop GTPase 3 (271 aa).

13–18 (GAGKST) is a binding site for GTP. Residues 70 to 72 (GPN) carry the Gly-Pro-Asn (GPN)-loop; involved in dimer interface motif. GTP is bound at residue 173–176 (SKVD).

It belongs to the GPN-loop GTPase family. Heterodimers with GPN1 or GPN2. Binds to RNA polymerase II (RNAPII).

Its function is as follows. Small GTPase required for proper nuclear import of RNA polymerase II and III (RNAPII and RNAPIII). May act at an RNAP assembly step prior to nuclear import. The chain is GPN-loop GTPase 3 from Eremothecium gossypii (strain ATCC 10895 / CBS 109.51 / FGSC 9923 / NRRL Y-1056) (Yeast).